Consider the following 705-residue polypeptide: Ribosomal RNA large subunit methyltransferase K/L (705 aa).

The region spanning 43 to 154 (LMYQSLMWSR…KDTASIALDL (112 aa)) is the THUMP domain.

This sequence belongs to the methyltransferase superfamily. RlmKL family.

The protein resides in the cytoplasm. The enzyme catalyses guanosine(2445) in 23S rRNA + S-adenosyl-L-methionine = N(2)-methylguanosine(2445) in 23S rRNA + S-adenosyl-L-homocysteine + H(+). It carries out the reaction guanosine(2069) in 23S rRNA + S-adenosyl-L-methionine = N(2)-methylguanosine(2069) in 23S rRNA + S-adenosyl-L-homocysteine + H(+). In terms of biological role, specifically methylates the guanine in position 2445 (m2G2445) and the guanine in position 2069 (m7G2069) of 23S rRNA. The sequence is that of Ribosomal RNA large subunit methyltransferase K/L from Erwinia tasmaniensis (strain DSM 17950 / CFBP 7177 / CIP 109463 / NCPPB 4357 / Et1/99).